The chain runs to 139 residues: uncharacterized protein (139 aa).

This is an uncharacterized protein from Galliformes (FAdV-1).